The sequence spans 291 residues: 4-hydroxy-tetrahydrodipicolinate synthase (291 aa).

Thr-44 is a pyruvate binding site. Tyr-132 acts as the Proton donor/acceptor in catalysis. Residue Lys-160 is the Schiff-base intermediate with substrate of the active site. Residue Ile-202 coordinates pyruvate.

It belongs to the DapA family. Homotetramer; dimer of dimers.

It is found in the cytoplasm. The enzyme catalyses L-aspartate 4-semialdehyde + pyruvate = (2S,4S)-4-hydroxy-2,3,4,5-tetrahydrodipicolinate + H2O + H(+). The protein operates within amino-acid biosynthesis; L-lysine biosynthesis via DAP pathway; (S)-tetrahydrodipicolinate from L-aspartate: step 3/4. Functionally, catalyzes the condensation of (S)-aspartate-beta-semialdehyde [(S)-ASA] and pyruvate to 4-hydroxy-tetrahydrodipicolinate (HTPA). The polypeptide is 4-hydroxy-tetrahydrodipicolinate synthase (Syntrophobacter fumaroxidans (strain DSM 10017 / MPOB)).